The following is a 281-amino-acid chain: Pantothenate synthetase (281 aa).

30–37 (MGNLHQGH) serves as a coordination point for ATP. The Proton donor role is filled by His37. Gln61 provides a ligand contact to (R)-pantoate. Residue Gln61 coordinates beta-alanine. 149 to 152 (GNKD) provides a ligand contact to ATP. (R)-pantoate is bound at residue Gln155. ATP is bound by residues Ile178 and 186–189 (MSSR).

The protein belongs to the pantothenate synthetase family. In terms of assembly, homodimer.

It localises to the cytoplasm. The catalysed reaction is (R)-pantoate + beta-alanine + ATP = (R)-pantothenate + AMP + diphosphate + H(+). Its pathway is cofactor biosynthesis; (R)-pantothenate biosynthesis; (R)-pantothenate from (R)-pantoate and beta-alanine: step 1/1. In terms of biological role, catalyzes the condensation of pantoate with beta-alanine in an ATP-dependent reaction via a pantoyl-adenylate intermediate. The protein is Pantothenate synthetase of Shewanella oneidensis (strain ATCC 700550 / JCM 31522 / CIP 106686 / LMG 19005 / NCIMB 14063 / MR-1).